The following is a 362-amino-acid chain: Phosphoserine aminotransferase (362 aa).

Residues Ser-9 and Arg-42 each coordinate L-glutamate. Pyridoxal 5'-phosphate-binding positions include 76 to 77, Trp-102, Thr-153, Asp-174, and Gln-197; that span reads GR. An N6-(pyridoxal phosphate)lysine modification is found at Lys-198. Residue 239–240 coordinates pyridoxal 5'-phosphate; that stretch reads NT.

The protein belongs to the class-V pyridoxal-phosphate-dependent aminotransferase family. SerC subfamily. In terms of assembly, homodimer. The cofactor is pyridoxal 5'-phosphate.

It localises to the cytoplasm. The catalysed reaction is O-phospho-L-serine + 2-oxoglutarate = 3-phosphooxypyruvate + L-glutamate. The enzyme catalyses 4-(phosphooxy)-L-threonine + 2-oxoglutarate = (R)-3-hydroxy-2-oxo-4-phosphooxybutanoate + L-glutamate. It participates in amino-acid biosynthesis; L-serine biosynthesis; L-serine from 3-phospho-D-glycerate: step 2/3. Its pathway is cofactor biosynthesis; pyridoxine 5'-phosphate biosynthesis; pyridoxine 5'-phosphate from D-erythrose 4-phosphate: step 3/5. Catalyzes the reversible conversion of 3-phosphohydroxypyruvate to phosphoserine and of 3-hydroxy-2-oxo-4-phosphonooxybutanoate to phosphohydroxythreonine. This Salmonella newport (strain SL254) protein is Phosphoserine aminotransferase.